Here is a 387-residue protein sequence, read N- to C-terminus: Chorismate synthase (387 aa).

NADP(+) is bound by residues arginine 39 and arginine 45. FMN-binding positions include 130–132 (RSS), 251–252 (NA), glycine 295, 310–314 (KPIPT), and arginine 336.

This sequence belongs to the chorismate synthase family. In terms of assembly, homotetramer. The cofactor is FMNH2.

It catalyses the reaction 5-O-(1-carboxyvinyl)-3-phosphoshikimate = chorismate + phosphate. It participates in metabolic intermediate biosynthesis; chorismate biosynthesis; chorismate from D-erythrose 4-phosphate and phosphoenolpyruvate: step 7/7. Functionally, catalyzes the anti-1,4-elimination of the C-3 phosphate and the C-6 proR hydrogen from 5-enolpyruvylshikimate-3-phosphate (EPSP) to yield chorismate, which is the branch point compound that serves as the starting substrate for the three terminal pathways of aromatic amino acid biosynthesis. This reaction introduces a second double bond into the aromatic ring system. This Exiguobacterium sp. (strain ATCC BAA-1283 / AT1b) protein is Chorismate synthase.